The sequence spans 247 residues: Neurotrophic factor BDNF precursor form (247 aa).

The N-terminal stretch at 1–18 is a signal peptide; the sequence is MTILFLTMVISYFGCMKA. Residues 19–128 constitute a propeptide that is removed on maturation; it reads APMKEANVRG…AANMSMRVRR (110 aa). Asparagine 121 carries an N-linked (GlcNAc...) asparagine glycan. 3 disulfide bridges follow: cysteine 141–cysteine 208, cysteine 186–cysteine 237, and cysteine 196–cysteine 239.

This sequence belongs to the NGF-beta family. Monomers and homodimers. Binds to NTRK2/TRKB. Can form heterodimers with other neurotrophin family members, such as NTF3 and NTF4 (in vitro), but the physiological relevance of this is not clear. BDNF precursor form: interacts with the heterodimer formed by NGFR and SORCS2. Mature BDNF has much lower affinity for the heterodimer formed by NGFR and SORCS2. N-glycosylated and glycosulfated, contrary to mature BDNF. In terms of processing, mature BDNF is produced by proteolytic removal of the propeptide, catalyzed by a FURIN family member. In addition, the precursor form is proteolytically cleaved within the propeptide, but this is not an obligatory intermediate for the production of mature BDNF. Can be converted into mature BDNF by plasmin (PLG).

It localises to the secreted. Important signaling molecule that activates signaling cascades downstream of NTRK2. During development, promotes the survival and differentiation of selected neuronal populations of the peripheral and central nervous systems. Participates in axonal growth, pathfinding and in the modulation of dendritic growth and morphology. Major regulator of synaptic transmission and plasticity at adult synapses in many regions of the CNS. The versatility of BDNF is emphasized by its contribution to a range of adaptive neuronal responses including long-term potentiation (LTP), long-term depression (LTD), certain forms of short-term synaptic plasticity, as well as homeostatic regulation of intrinsic neuronal excitability. In terms of biological role, important signaling molecule that activates signaling cascades downstream of NTRK2. Activates signaling cascades via the heterodimeric receptor formed by NGFR and SORCS2. Signaling via NGFR and SORCS2 plays a role in synaptic plasticity and long-term depression (LTD). Binding to NGFR and SORCS2 promotes neuronal apoptosis. Promotes neuronal growth cone collapse. This is Neurotrophic factor BDNF precursor form (BDNF) from Ursus arctos (Brown bear).